Consider the following 882-residue polypeptide: Translation initiation factor IF-2 (882 aa).

The disordered stretch occupies residues 28 to 296 (GIRKSADDSV…LQQGFQKPAQ (269 aa)). The span at 67–81 (STLNIPGTGGKSKSV) shows a compositional bias: polar residues. The segment covering 92-209 (VKRDPQEAER…RMAEENKWTD (118 aa)) has biased composition (basic and acidic residues). The span at 244–258 (GRGRNAKAARPKKGN) shows a compositional bias: basic residues. The span at 259 to 272 (KHAESKADREEARA) shows a compositional bias: basic and acidic residues. Residues 381-550 (PRAPVVTIMG…LLQAEVLELK (170 aa)) form the tr-type G domain. A G1 region spans residues 390–397 (GHVDHGKT). GTP is bound at residue 390–397 (GHVDHGKT). Residues 415 to 419 (GITQH) are G2. The segment at 436-439 (DTPG) is G3. GTP contacts are provided by residues 436 to 440 (DTPGH) and 490 to 493 (NKID). Residues 490–493 (NKID) form a G4 region. A G5 region spans residues 526 to 528 (SAK). Lysine 800 is subject to N6-acetyllysine.

It belongs to the TRAFAC class translation factor GTPase superfamily. Classic translation factor GTPase family. IF-2 subfamily.

The protein localises to the cytoplasm. Functionally, one of the essential components for the initiation of protein synthesis. Protects formylmethionyl-tRNA from spontaneous hydrolysis and promotes its binding to the 30S ribosomal subunits. Also involved in the hydrolysis of GTP during the formation of the 70S ribosomal complex. The sequence is that of Translation initiation factor IF-2 from Shigella boydii serotype 4 (strain Sb227).